We begin with the raw amino-acid sequence, 402 residues long: 1-deoxy-D-xylulose 5-phosphate reductoisomerase (402 aa).

NADPH contacts are provided by Thr-10, Gly-11, Ser-12, Ile-13, Asn-38, and Asn-124. 1-deoxy-D-xylulose 5-phosphate is bound at residue Lys-125. Glu-126 is an NADPH binding site. Asp-150 lines the Mn(2+) pocket. 1-deoxy-D-xylulose 5-phosphate is bound by residues Ser-151, Glu-152, Ser-186, and His-209. Glu-152 is a binding site for Mn(2+). Position 215 (Gly-215) interacts with NADPH. The 1-deoxy-D-xylulose 5-phosphate site is built by Ser-222, Asn-227, Lys-228, and Glu-231. Glu-231 lines the Mn(2+) pocket.

The protein belongs to the DXR family. The cofactor is Mg(2+). Mn(2+) serves as cofactor.

The enzyme catalyses 2-C-methyl-D-erythritol 4-phosphate + NADP(+) = 1-deoxy-D-xylulose 5-phosphate + NADPH + H(+). The protein operates within isoprenoid biosynthesis; isopentenyl diphosphate biosynthesis via DXP pathway; isopentenyl diphosphate from 1-deoxy-D-xylulose 5-phosphate: step 1/6. In terms of biological role, catalyzes the NADPH-dependent rearrangement and reduction of 1-deoxy-D-xylulose-5-phosphate (DXP) to 2-C-methyl-D-erythritol 4-phosphate (MEP). The chain is 1-deoxy-D-xylulose 5-phosphate reductoisomerase from Vibrio vulnificus (strain YJ016).